The chain runs to 2968 residues: Trinucleotide repeat-containing gene 18 protein (2968 aa).

Disordered stretches follow at residues 1-24 (MDGRDFGPQRSVHGPPPPLLSGLA) and 139-261 (GSPL…LAER). Over residues 139-150 (GSPLLSQLGQPS) the composition is skewed to low complexity. Basic and acidic residues-rich tracts occupy residues 221–233 (GKKDPRARGEEAS) and 243–260 (QEARAEGRQDRGPPRLAE). S263 is subject to Phosphoserine. The span at 304-322 (GAKEAARQDEGARLLRRTE) shows a compositional bias: basic and acidic residues. Disordered regions lie at residues 304-356 (GAKE…PAGV) and 381-488 (FDER…PAAQ). The segment covering 327–351 (GPRPCPSPLPPPPAPPKGPPAPPAA) has biased composition (pro residues). 3 stretches are compositionally biased toward basic and acidic residues: residues 395-405 (RDARAREREAG), 419-431 (PLDRPEGLREKNS), and 464-479 (ELLKPEADPRPCERAP). Phosphoserine is present on S611. Disordered stretches follow at residues 612–679 (PFGG…EVRH), 941–1002 (EHRA…SPVA), 1019–1055 (PAYAYPATPSSHPTSPPPASPPPTPGITRKEEAPENV), 1106–1190 (DADG…MATP), 1212–1236 (SCAEPSECPDFVEGPEPRVDSPGRT), 1279–1306 (LAQVAPSESQPTLEMSDCDVPAGEGQCP), 1497–1566 (KQRE…SDDY), and 1687–1855 (SLKS…RERA). Residue K620 forms a Glycyl lysine isopeptide (Lys-Gly) (interchain with G-Cter in SUMO2) linkage. 2 stretches are compositionally biased toward basic and acidic residues: residues 651-660 (LKRDPERPES) and 941-955 (EHRAEMEEKGSKRGL). Positions 916-949 (LQQQAAQALELQRSAQLVQERLKAQEHRAEMEEK) form a coiled coil. Low complexity-rich tracts occupy residues 966–983 (AGPGLLPRKPPGLAAGPA) and 1019–1031 (PAYAYPATPSSHP). The segment covering 1032 to 1043 (TSPPPASPPPTP) has biased composition (pro residues). Positions 1046–1055 (TRKEEAPENV) are enriched in basic and acidic residues. Residues S1127 and S1136 each carry the phosphoserine modification. Over residues 1142–1162 (EPLREGPEEEPLAEREVKAEV) the composition is skewed to basic and acidic residues. Residues 1171-1181 (ELPPLESPLPL) are compositionally biased toward pro residues. Positions 1481 to 1516 (LDFRMRLAEVQRQYKEKQRELVKLQRRRDSEDRREE) form a coiled coil. The segment covering 1497-1519 (KQRELVKLQRRRDSEDRREEPHR) has biased composition (basic and acidic residues). Residues 1520-1534 (SLARRGPGRPRKRTH) are compositionally biased toward basic residues. S1540 carries the post-translational modification Phosphoserine. The segment covering 1549–1563 (GHSSGKLSSKSLLTS) has biased composition (low complexity). The span at 1816–1842 (SSEESFDQDESSEEEDEEEELEEEDEA) shows a compositional bias: acidic residues. Residues S1857 and S1863 each carry the phosphoserine modification. Disordered regions lie at residues 1912-2148 (YTDS…LTPA) and 2295-2771 (LLVP…RLPS). Basic and acidic residues-rich tracts occupy residues 1957-1968 (SPDKAKLAVEKG) and 1993-2004 (LWTRRRSERIFL). Over residues 2007–2024 (ASAAAPAPVSTAPATKTS) the composition is skewed to low complexity. Residues 2034 to 2046 (PRKDAGRAKDRKD) are compositionally biased toward basic and acidic residues. Low complexity predominate over residues 2069–2085 (ALPSEARAPHASSLTAA). Residues 2093–2103 (KGKEVKKENRG) are compositionally biased toward basic and acidic residues. T2146 is subject to Phosphothreonine. The segment covering 2307–2316 (TSKDTGEGKD) has biased composition (basic and acidic residues). Residues 2329–2338 (ARGRGRKPSA) are compositionally biased toward basic residues. Positions 2365 to 2374 (EPSSTPGSKK) are enriched in low complexity. The segment covering 2375-2384 (SPPEPVDKRA) has biased composition (basic and acidic residues). The segment covering 2390–2401 (RPAPPQPSPAPP) has biased composition (pro residues). Over residues 2411 to 2433 (PFAELPAPATSLAPAPLITMPAT) the composition is skewed to low complexity. 2 stretches are compositionally biased toward basic and acidic residues: residues 2441 to 2468 (RAAEESGAKGPRRPGEEAELLVKLDHEG) and 2477 to 2487 (AKEALLLREDP). Low complexity-rich tracts occupy residues 2559-2580 (SSSSSSSGSSSSSSSSSSSGSE) and 2603-2671 (SAAS…SSSS). Acidic residues predominate over residues 2673-2685 (TDEDSSCSSDDEA). Positions 2723-2736 (APQPQAPPPQPTQP) are enriched in pro residues. S2771 is subject to Phosphoserine. A BAH domain is found at 2817-2962 (EMIRIGDCAV…PTTGMIFSTD (146 aa)).

This is Trinucleotide repeat-containing gene 18 protein from Homo sapiens (Human).